Reading from the N-terminus, the 561-residue chain is Alpha-1D adrenergic receptor (561 aa).

The Extracellular portion of the chain corresponds to M1 to G90. The tract at residues T10–A71 is disordered. The segment covering G21 to S56 has biased composition (gly residues). Residues N60 and N76 are each glycosylated (N-linked (GlcNAc...) asparagine). The chain crosses the membrane as a helical span at residues V91–V115. The Cytoplasmic portion of the chain corresponds to A116–Y127. Residues F128–L153 form a helical membrane-spanning segment. The Extracellular portion of the chain corresponds to G154 to C163. The chain crosses the membrane as a helical span at residues D164 to V186. The Cytoplasmic segment spans residues D187–A207. Residues A208–P232 traverse the membrane as a helical segment. The Extracellular segment spans residues V233 to E245. A helical transmembrane segment spans residues V246 to C269. The Cytoplasmic segment spans residues R270–K342. Residues T343 to L367 form a helical membrane-spanning segment. Residues F368–S374 lie on the Extracellular side of the membrane. A helical membrane pass occupies residues E375 to S399. Residues S400–I561 are Cytoplasmic-facing. C413 carries the S-palmitoyl cysteine lipid modification. Positions A452–A481 are disordered. Residues T467 to K479 are compositionally biased toward polar residues.

This sequence belongs to the G-protein coupled receptor 1 family. Adrenergic receptor subfamily. ADRA1D sub-subfamily. In terms of assembly, interacts with FLNA (via filamin repeat 21); increases PKA-mediated phosphorylation of FLNA. In terms of processing, palmitoylated. Palmitoylation by ZDHHC21 may increase the expression of the receptor and regulate downstream signaling. Vas deferens, hippocampus, cerebral cortex, aorta, brain stem, heart and spleen.

The protein localises to the cell membrane. Functionally, this alpha-adrenergic receptor mediates its effect through the influx of extracellular calcium. This is Alpha-1D adrenergic receptor (Adra1d) from Rattus norvegicus (Rat).